The primary structure comprises 440 residues: Transposon Ty1-LR2 Gag polyprotein (440 aa).

3 stretches are compositionally biased toward polar residues: residues 1–23, 48–60, and 127–152; these read MESQ…SVTS, TKAN…TPAS, and QSQF…GNTF. Disordered regions lie at residues 1-93, 126-174, and 352-440; these read MESQ…MMTQ, PQSQ…PPPM, and GSRN…PGTY. Residues 153–165 are compositionally biased toward low complexity; sequence TDSSSADSDMTST. Residues 299–401 form an RNA-binding region; the sequence is NNGIHINNKV…NSKSKTARAH (103 aa). Residues 402–418 show a composition bias toward low complexity; the sequence is NVSTSNNSPSTDNDSIS. Ser416 is subject to Phosphoserine. Positions 419–428 are enriched in polar residues; it reads KSTTEPIQLN. Over residues 429 to 440 the composition is skewed to basic and acidic residues; it reads NKHDLHLRPGTY.

As to quaternary structure, homotrimer.

Its subcellular location is the cytoplasm. In terms of biological role, capsid protein (CA) is the structural component of the virus-like particle (VLP), forming the shell that encapsulates the retrotransposons dimeric RNA genome. The particles are assembled from trimer-clustered units and there are holes in the capsid shells that allow for the diffusion of macromolecules. CA also has nucleocapsid-like chaperone activity, promoting primer tRNA(i)-Met annealing to the multipartite primer-binding site (PBS), dimerization of Ty1 RNA and initiation of reverse transcription. The protein is Transposon Ty1-LR2 Gag polyprotein (TY1A-LR2) of Saccharomyces cerevisiae (strain ATCC 204508 / S288c) (Baker's yeast).